We begin with the raw amino-acid sequence, 244 residues long: Small ribosomal subunit protein eS4 (244 aa).

One can recognise an S4 RNA-binding domain in the interval Leu43–Glu106.

This sequence belongs to the eukaryotic ribosomal protein eS4 family.

The protein is Small ribosomal subunit protein eS4 of Methanococcus maripaludis (strain C5 / ATCC BAA-1333).